We begin with the raw amino-acid sequence, 536 residues long: GMP synthase [glutamine-hydrolyzing] (536 aa).

In terms of domain architecture, Glutamine amidotransferase type-1 spans 19–212; the sequence is RILILDFGSQ…VHEICDCAGS (194 aa). C96 functions as the Nucleophile in the catalytic mechanism. Catalysis depends on residues H186 and E188. Residues 213 to 411 enclose the GMPS ATP-PPase domain; that stretch reads WTPDNIIDMR…LGLPAKMINR (199 aa). Position 240-246 (240-246) interacts with ATP; the sequence is SGGVDSS.

As to quaternary structure, homodimer.

The catalysed reaction is XMP + L-glutamine + ATP + H2O = GMP + L-glutamate + AMP + diphosphate + 2 H(+). The protein operates within purine metabolism; GMP biosynthesis; GMP from XMP (L-Gln route): step 1/1. Catalyzes the synthesis of GMP from XMP. The polypeptide is GMP synthase [glutamine-hydrolyzing] (Psychrobacter arcticus (strain DSM 17307 / VKM B-2377 / 273-4)).